We begin with the raw amino-acid sequence, 128 residues long: Nucleoside diphosphate kinase B (128 aa).

An N-acetylmethionine modification is found at M1. Residues K9, F39, T70, R81, and N91 each contribute to the ATP site. H94 (pros-phosphohistidine intermediate) is an active-site residue.

The protein belongs to the NDK family. The cofactor is Mg(2+).

It is found in the cytoplasm. The protein resides in the nucleus. Its subcellular location is the cell projection. The protein localises to the lamellipodium. It localises to the ruffle. The catalysed reaction is a 2'-deoxyribonucleoside 5'-diphosphate + ATP = a 2'-deoxyribonucleoside 5'-triphosphate + ADP. It carries out the reaction a ribonucleoside 5'-diphosphate + ATP = a ribonucleoside 5'-triphosphate + ADP. Its function is as follows. Major role in the synthesis of nucleoside triphosphates other than ATP. This chain is Nucleoside diphosphate kinase B (nme2), found in Merluccius australis australis (Austral hake).